Here is a 447-residue protein sequence, read N- to C-terminus: Na(+)-translocating NADH-quinone reductase subunit A (447 aa).

The protein belongs to the NqrA family. As to quaternary structure, composed of six subunits; NqrA, NqrB, NqrC, NqrD, NqrE and NqrF.

It catalyses the reaction a ubiquinone + n Na(+)(in) + NADH + H(+) = a ubiquinol + n Na(+)(out) + NAD(+). Its function is as follows. NQR complex catalyzes the reduction of ubiquinone-1 to ubiquinol by two successive reactions, coupled with the transport of Na(+) ions from the cytoplasm to the periplasm. NqrA to NqrE are probably involved in the second step, the conversion of ubisemiquinone to ubiquinol. The polypeptide is Na(+)-translocating NADH-quinone reductase subunit A (Haemophilus influenzae (strain PittEE)).